The chain runs to 650 residues: Putative polypeptide N-acetylgalactosaminyltransferase 9 (650 aa).

The Cytoplasmic segment spans residues 1–11 (MAFIWRRRSTT). The chain crosses the membrane as a helical; Signal-anchor for type II membrane protein span at residues 12 to 31 (IVKLVAFALAIWFCIAFLVY). The Lumenal segment spans residues 32-650 (TDDTRRRAAQ…TLENYDSSKL (619 aa)). The tract at residues 84 to 154 (NVIGGGGQKQ…NPGELGKPVR (71 aa)) is disordered. The span at 107-136 (HKADLQAERMRKKAAEQPKKKPQEDSKKVI) shows a compositional bias: basic and acidic residues. 5 disulfide bridges follow: C198-C432, C423-C499, C535-C554, C577-C590, and C616-C631. Residues 208–317 (LPKTDVIICF…EGWLEPLLDR (110 aa)) are catalytic subdomain A. Positions 216, 249, and 278 each coordinate substrate. D301 contacts Mn(2+). S302 and H303 together coordinate substrate. H303 contributes to the Mn(2+) binding site. N321 and N373 each carry an N-linked (GlcNAc...) asparagine glycan. The interval 378-440 (PVYSPTMAGG…PCSHVGHIFR (63 aa)) is catalytic subdomain B. H437 contacts Mn(2+). Residues R440 and Y445 each coordinate substrate. A Ricin B-type lectin domain is found at 521-643 (AHGEIRNLGY…SLSRQQWTLE (123 aa)).

This sequence belongs to the glycosyltransferase 2 family. GalNAc-T subfamily. As to quaternary structure, isoform A forms homotetramer. Isoform B forms homodimer. The cofactor is Mn(2+).

The protein resides in the golgi apparatus membrane. The enzyme catalyses L-seryl-[protein] + UDP-N-acetyl-alpha-D-galactosamine = a 3-O-[N-acetyl-alpha-D-galactosaminyl]-L-seryl-[protein] + UDP + H(+). The catalysed reaction is L-threonyl-[protein] + UDP-N-acetyl-alpha-D-galactosamine = a 3-O-[N-acetyl-alpha-D-galactosaminyl]-L-threonyl-[protein] + UDP + H(+). It functions in the pathway protein modification; protein glycosylation. Functionally, catalyzes the initial reaction in O-linked oligosaccharide biosynthesis, the transfer of an N-acetyl-D-galactosamine residue to a serine or threonine residue on the protein receptor. It can both act as a peptide transferase that transfers GalNAc onto unmodified peptide substrates, and as a glycopeptide transferase that requires the prior addition of a GalNAc on a peptide before adding additional GalNAc moieties. Its function is as follows. N-acetylgalactosaminyltransferase which preferentially O-glycosylates negatively charge substrates. O-glycosylates mucin-like protein Sgs3 in the salivary gland but to a lesser extent than isoform B. By regulating the O-glycosylation of secretory cargo proteins plays a role in the morphology and maturation of salivary gland secretory granules. In terms of biological role, N-acetylgalactosaminyltransferase which preferentially O-glycosylates positively charge substrates. O-glycosylates mucin-like protein Sgs3 in the salivary gland. By regulating the O-glycosylation of secretory cargo proteins, plays a role in the morphology and maturation of salivary gland secretory granules. The chain is Putative polypeptide N-acetylgalactosaminyltransferase 9 from Drosophila melanogaster (Fruit fly).